The following is a 210-amino-acid chain: Large ribosomal subunit protein uL15 (210 aa).

Disordered regions lie at residues 1–64 (MADD…AAPR) and 76–104 (AAGAKKEKTRVGRGEGSKGKTAGRGTKGT). The span at 9-54 (EAAAKPVAEKATATALAKKAPAKAAAADKAAPAAKGETVAAKPAKA) shows a compositional bias: low complexity. Residues 79-93 (AKKEKTRVGRGEGSK) show a composition bias toward basic and acidic residues.

It belongs to the universal ribosomal protein uL15 family. Part of the 50S ribosomal subunit.

Binds to the 23S rRNA. The chain is Large ribosomal subunit protein uL15 from Leifsonia xyli subsp. xyli (strain CTCB07).